Consider the following 430-residue polypeptide: Tol-Pal system protein TolB (430 aa).

Residues 1–21 (MKQALRVAFGFLILWASVLHA) form the signal peptide.

It belongs to the TolB family. As to quaternary structure, the Tol-Pal system is composed of five core proteins: the inner membrane proteins TolA, TolQ and TolR, the periplasmic protein TolB and the outer membrane protein Pal. They form a network linking the inner and outer membranes and the peptidoglycan layer.

It is found in the periplasm. Functionally, part of the Tol-Pal system, which plays a role in outer membrane invagination during cell division and is important for maintaining outer membrane integrity. TolB occupies a key intermediary position in the Tol-Pal system because it communicates directly with both membrane-embedded components, Pal in the outer membrane and TolA in the inner membrane. In Shigella boydii serotype 18 (strain CDC 3083-94 / BS512), this protein is Tol-Pal system protein TolB.